The sequence spans 684 residues: Glycine--tRNA ligase beta subunit (684 aa).

The protein belongs to the class-II aminoacyl-tRNA synthetase family. As to quaternary structure, tetramer of two alpha and two beta subunits.

Its subcellular location is the cytoplasm. It catalyses the reaction tRNA(Gly) + glycine + ATP = glycyl-tRNA(Gly) + AMP + diphosphate. This is Glycine--tRNA ligase beta subunit from Pseudomonas fluorescens (strain Pf0-1).